The chain runs to 293 residues: Aspartate carbamoyltransferase catalytic subunit (293 aa).

Carbamoyl phosphate is bound by residues Arg-50 and Thr-51. Lys-78 is an L-aspartate binding site. Carbamoyl phosphate-binding residues include Arg-100, His-127, and Gln-130. Residues Arg-160 and Arg-210 each coordinate L-aspartate. Positions 253 and 254 each coordinate carbamoyl phosphate.

The protein belongs to the aspartate/ornithine carbamoyltransferase superfamily. ATCase family. In terms of assembly, heterododecamer (2C3:3R2) of six catalytic PyrB chains organized as two trimers (C3), and six regulatory PyrI chains organized as three dimers (R2).

The enzyme catalyses carbamoyl phosphate + L-aspartate = N-carbamoyl-L-aspartate + phosphate + H(+). It functions in the pathway pyrimidine metabolism; UMP biosynthesis via de novo pathway; (S)-dihydroorotate from bicarbonate: step 2/3. Functionally, catalyzes the condensation of carbamoyl phosphate and aspartate to form carbamoyl aspartate and inorganic phosphate, the committed step in the de novo pyrimidine nucleotide biosynthesis pathway. This Staphylococcus epidermidis (strain ATCC 12228 / FDA PCI 1200) protein is Aspartate carbamoyltransferase catalytic subunit.